Reading from the N-terminus, the 435-residue chain is Islet cell autoantigen 1-like protein (435 aa).

An AH domain is found at 44-247 (ASDAELDAKL…TAQMMSQIQE (204 aa)). Residues 391-435 (WASQEGSEHSDTLPVPSQHPKKLKYLGPLSNPDAIGHSDDELLNA) are disordered. The span at 426 to 435 (GHSDDELLNA) shows a compositional bias: basic and acidic residues.

This chain is Islet cell autoantigen 1-like protein (Ica1l), found in Rattus norvegicus (Rat).